The following is a 256-amino-acid chain: Hemin import ATP-binding protein HmuV (256 aa).

One can recognise an ABC transporter domain in the interval 2–238; the sequence is ISAQNLVYSL…QALTMLYGAD (237 aa). Position 34–41 (34–41) interacts with ATP; it reads GPNGAGKS.

The protein belongs to the ABC transporter superfamily. Heme (hemin) importer (TC 3.A.1.14.5) family. The complex is composed of two ATP-binding proteins (HmuV), two transmembrane proteins (HmuU) and a solute-binding protein (HmuT).

Its subcellular location is the cell inner membrane. Part of the ABC transporter complex HmuTUV involved in hemin import. Responsible for energy coupling to the transport system. The sequence is that of Hemin import ATP-binding protein HmuV from Escherichia coli O6:K15:H31 (strain 536 / UPEC).